Here is a 347-residue protein sequence, read N- to C-terminus: MSEERFVSGHRRPEDARIEETLRPQRLADYPGQERVKEQLSIYIAAAKKRGEPLDHVLLYGPPGLGKTTLAHIIAHEMGVNLRITSGPAISHQGDLAAILTQLSEGDVLFVDEIHRLNRLVEETLYPAMEDFALDIILGKGPAARTLRLDLPRFTLIGATTRYGALTSPLRDRFGVVLQLQFYSEEELTRILMRAARILNVPLDPGGAREIARRSRGTPRVANRLLRRLRDYAQVRADGVITRDVADAGLRMMGVDAMGLDTVDHKVLLTIIHHYGGGPVGLDTIAAATSEEPETIEDVYEPYLMQIGFLQRTPRGRVATRAAYEYLNIPYTDHPDEPEGPVQPRLF.

Positions 1–183 (MSEERFVSGH…FGVVLQLQFY (183 aa)) are large ATPase domain (RuvB-L). Residues L22, R23, G64, K67, T68, T69, 130-132 (EDF), R173, Y183, and R220 contribute to the ATP site. Mg(2+) is bound at residue T68. A small ATPAse domain (RuvB-S) region spans residues 184-254 (SEEELTRILM…VADAGLRMMG (71 aa)). The segment at 257–347 (AMGLDTVDHK…PEGPVQPRLF (91 aa)) is head domain (RuvB-H). DNA contacts are provided by R312 and R317.

It belongs to the RuvB family. As to quaternary structure, homohexamer. Forms an RuvA(8)-RuvB(12)-Holliday junction (HJ) complex. HJ DNA is sandwiched between 2 RuvA tetramers; dsDNA enters through RuvA and exits via RuvB. An RuvB hexamer assembles on each DNA strand where it exits the tetramer. Each RuvB hexamer is contacted by two RuvA subunits (via domain III) on 2 adjacent RuvB subunits; this complex drives branch migration. In the full resolvosome a probable DNA-RuvA(4)-RuvB(12)-RuvC(2) complex forms which resolves the HJ.

The protein localises to the cytoplasm. The catalysed reaction is ATP + H2O = ADP + phosphate + H(+). Functionally, the RuvA-RuvB-RuvC complex processes Holliday junction (HJ) DNA during genetic recombination and DNA repair, while the RuvA-RuvB complex plays an important role in the rescue of blocked DNA replication forks via replication fork reversal (RFR). RuvA specifically binds to HJ cruciform DNA, conferring on it an open structure. The RuvB hexamer acts as an ATP-dependent pump, pulling dsDNA into and through the RuvAB complex. RuvB forms 2 homohexamers on either side of HJ DNA bound by 1 or 2 RuvA tetramers; 4 subunits per hexamer contact DNA at a time. Coordinated motions by a converter formed by DNA-disengaged RuvB subunits stimulates ATP hydrolysis and nucleotide exchange. Immobilization of the converter enables RuvB to convert the ATP-contained energy into a lever motion, pulling 2 nucleotides of DNA out of the RuvA tetramer per ATP hydrolyzed, thus driving DNA branch migration. The RuvB motors rotate together with the DNA substrate, which together with the progressing nucleotide cycle form the mechanistic basis for DNA recombination by continuous HJ branch migration. Branch migration allows RuvC to scan DNA until it finds its consensus sequence, where it cleaves and resolves cruciform DNA. This chain is Holliday junction branch migration complex subunit RuvB, found in Symbiobacterium thermophilum (strain DSM 24528 / JCM 14929 / IAM 14863 / T).